A 183-amino-acid chain; its full sequence is BLOC-1-related complex subunit 8 homolog (183 aa).

Positions Met-152–His-183 are disordered. The segment covering Thr-159–His-183 has biased composition (polar residues).

This sequence belongs to the BORCS8 family.

It is found in the lysosome membrane. Functionally, may participate in the coupling of lysosomes to microtubule plus-end-directed kinesin motor. The sequence is that of BLOC-1-related complex subunit 8 homolog from Drosophila melanogaster (Fruit fly).